The following is a 530-amino-acid chain: UDP-glucuronosyltransferase 2B14 (530 aa).

The first 24 residues, M1–C24, serve as a signal peptide directing secretion. Residues N134 and N316 are each glycosylated (N-linked (GlcNAc...) asparagine). A helical membrane pass occupies residues V494–I510.

The protein belongs to the UDP-glycosyltransferase family.

It localises to the microsome membrane. The protein resides in the endoplasmic reticulum membrane. The enzyme catalyses glucuronate acceptor + UDP-alpha-D-glucuronate = acceptor beta-D-glucuronoside + UDP + H(+). UDPGT is of major importance in the conjugation and subsequent elimination of potentially toxic xenobiotics and endogenous compounds. In Oryctolagus cuniculus (Rabbit), this protein is UDP-glucuronosyltransferase 2B14 (UGT2B14).